Consider the following 325-residue polypeptide: Beta-ketoacyl-[acyl-carrier-protein] synthase III 2 (325 aa).

Residues Cys-113 and His-250 contribute to the active site. The interval Ser-251–Arg-255 is ACP-binding. Asn-280 is an active-site residue.

It belongs to the thiolase-like superfamily. FabH family. Homodimer.

It localises to the cytoplasm. It carries out the reaction 3-methylbutanoyl-CoA + malonyl-[ACP] + H(+) = 5-methyl-3-oxohexanoyl-[ACP] + CO2 + CoA. It catalyses the reaction 2-methylpropanoyl-CoA + malonyl-[ACP] + H(+) = 4-methyl-3-oxopentanoyl-[ACP] + CO2 + CoA. The enzyme catalyses (2S)-2-methylbutanoyl-CoA + malonyl-[ACP] + H(+) = (4S)-4-methyl-3-oxohexanoyl-[ACP] + CO2 + CoA. The catalysed reaction is malonyl-[ACP] + acetyl-CoA + H(+) = 3-oxobutanoyl-[ACP] + CO2 + CoA. It carries out the reaction malonyl-[ACP] + propanoyl-CoA + H(+) = 3-oxopentanoyl-[ACP] + CO2 + CoA. It catalyses the reaction butanoyl-CoA + malonyl-[ACP] + H(+) = 3-oxohexanoyl-[ACP] + CO2 + CoA. The enzyme catalyses pentanoyl-CoA + malonyl-[ACP] + H(+) = 3-oxoheptanoyl-[ACP] + CO2 + CoA. The catalysed reaction is hexanoyl-CoA + malonyl-[ACP] + H(+) = 3-oxooctanoyl-[ACP] + CO2 + CoA. It carries out the reaction heptanoyl-CoA + malonyl-[ACP] + H(+) = 3-oxononanoyl-[ACP] + CO2 + CoA. Its pathway is lipid metabolism; fatty acid biosynthesis. In terms of biological role, catalyzes the condensation reaction of fatty acid synthesis by the addition to an acyl acceptor of two carbons from malonyl-ACP. Catalyzes the first condensation reaction which initiates fatty acid synthesis and may therefore play a role in governing the total rate of fatty acid production. Possesses both acetoacetyl-ACP synthase and acetyl transacylase activities. Has some substrate specificity for branched chain acyl-CoA, determining the biosynthesis of branched-chain of fatty acids instead of straight-chain. This chain is Beta-ketoacyl-[acyl-carrier-protein] synthase III 2, found in Bacillus subtilis (strain 168).